A 307-amino-acid chain; its full sequence is Ribosomal RNA small subunit methyltransferase H (307 aa).

S-adenosyl-L-methionine contacts are provided by residues 38 to 40, Asp-58, Phe-82, Asp-99, and Gln-106; that span reads GGH.

The protein belongs to the methyltransferase superfamily. RsmH family.

The protein localises to the cytoplasm. It carries out the reaction cytidine(1402) in 16S rRNA + S-adenosyl-L-methionine = N(4)-methylcytidine(1402) in 16S rRNA + S-adenosyl-L-homocysteine + H(+). Its function is as follows. Specifically methylates the N4 position of cytidine in position 1402 (C1402) of 16S rRNA. This is Ribosomal RNA small subunit methyltransferase H from Variovorax paradoxus (strain S110).